A 409-amino-acid chain; its full sequence is Nucleoprotein (409 aa).

4 disordered regions span residues 1 to 32 (MASGKATGKTDAPAPVIKLGGPRPPKVGSSGN), 46 to 84 (SPQPKFEGSGVPDNENFKTSQQHGYWRRQARFKPGKGRR), 121 to 194 (ADVK…GSED), and 238 to 259 (VDQVFGPRTKGKEGNFGDDKMN). An RNA-binding region spans residues 29 to 160 (SSGNASWFQA…GNFRWDFIPL (132 aa)). Residues 31-156 (GNASWFQAIK…GGPDGNFRWD (126 aa)) enclose the CoV N NTD domain. The segment covering 70–84 (YWRRQARFKPGKGRR) has biased composition (basic residues). Residues 162 to 179 (RGRSGRSTAASSAASSRP) are compositionally biased toward low complexity. 2 stretches are compositionally biased toward basic and acidic residues: residues 180-192 (PSREGSRGRRSGS) and 247-259 (KGKEGNFGDDKMN). A phosphoserine; by host mark is found at S190 and S192. Residues 215 to 331 (TKAKADEMAH…QCVDGVGTRP (117 aa)) form the CoV N CTD domain. The dimerization stretch occupies residues 226 to 333 (RYCKRTIPPG…VDGVGTRPKD (108 aa)). A disulfide bond links C320 and C323. The disordered stretch occupies residues 326–409 (GVGTRPKDDE…GDSALGENEL (84 aa)). Residues 341–356 (RSSSRPATRTSSPAPR) are compositionally biased toward low complexity. Residues 358 to 367 (QRLKKEKRPK) are compositionally biased toward basic residues. The span at 368-384 (KQDDEVDKALTSDEERN) shows a compositional bias: basic and acidic residues. The residue at position 378 (T378) is a Phosphothreonine; by host. S379 bears the Phosphoserine; by host mark.

This sequence belongs to the gammacoronavirus nucleocapsid protein family. Homooligomer. Both monomeric and oligomeric forms interact with RNA. Interacts with protein M. Interacts with NSP3; this interaction serves to tether the genome to the newly translated replicase-transcriptase complex at a very early stage of infection. Post-translationally, ADP-ribosylated. The ADP-ribosylation is retained in the virion during infection. In terms of processing, phosphorylated on serine and threonine residues.

Its subcellular location is the virion. It is found in the host endoplasmic reticulum-Golgi intermediate compartment. The protein resides in the host Golgi apparatus. Packages the positive strand viral genome RNA into a helical ribonucleocapsid (RNP) and plays a fundamental role during virion assembly through its interactions with the viral genome and membrane protein M. Plays an important role in enhancing the efficiency of subgenomic viral RNA transcription as well as viral replication. The sequence is that of Nucleoprotein from Avian infectious bronchitis virus (strain Gray) (IBV).